We begin with the raw amino-acid sequence, 876 residues long: MSKSTAEIRQAFLDFFHSKGHQVVASSSLVPHNDPTLLFTNAGMNQFKDVFLGLDKRNYSRATTSQRCVRAGGKHNDLENVGYTARHHTFFEMLGNFSFGDYFKHDAIQFAWELLTSEKWFALPKERLWVTVYESDDEAYEIWEKEVGIPRERIIRIGDNKGAPYASDNFWQMGDTGPCGPCTEIFYDHGDHIWGGPPGSPEEDGDRYIEIWNIVFMQFNRQADGTMEPLPKPSVDTGMGLERIAAVLQHVNSNYDIDLFRTLIQAVAKVTGATDLSNKSLRVIADHIRSCAFLIADGVMPSNENRGYVLRRIIRRAVRHGNMLGAKETFFYKLVGPLIDVMGSAGEDLKRQQAQVEQVLKTEEEQFARTLERGLALLDEELAKLSGDTLDGETAFRLYDTYGFPVDLTADVCRERNIKVDEAGFEAAMEEQRRRAREASGFGADYNAMIRVDSASEFKGYDHLELNGKVTALFVDGKAVDAINAGQEAVVVLDQTPFYAESGGQVGDKGELKGANFSFAVEDTQKYGQAIGHIGKLAAGSLKVGDAVQADIDEARRARIRLNHSATHLMHAALRQVLGTHVSQKGSLVNDKVLRFDFSHNEAMKPEEIRAVEDLVNAQIRRNLPIETNIMNLEAAKAKGAMALFGEKYDERVRVLSMGDFSTELCGGTHASRTGDIGLFRIISESGTAAGVRRIEAVTGEGAITTVHADSDRLSEVAHLLKGDSNNLADKVRSVLERTRQLEKELQQLKEQAAAQESANLSSKAIDVNGVKLLVSELSGVEPKMLRTMVDDLKNQLGSTIIVLATVAEGKVSLIAGVSKDVTDRVKAGELIGMVAQQVGGKGGGRPDMAQAGGTDAAALPAALASVKGWVSAKLQ.

N6-acetyllysine is present on K74. Zn(2+)-binding residues include H564, H568, C666, and H670.

This sequence belongs to the class-II aminoacyl-tRNA synthetase family. In terms of assembly, homotetramer. It depends on Zn(2+) as a cofactor.

The protein resides in the cytoplasm. It carries out the reaction tRNA(Ala) + L-alanine + ATP = L-alanyl-tRNA(Ala) + AMP + diphosphate. Functionally, catalyzes the attachment of alanine to tRNA(Ala) in a two-step reaction: alanine is first activated by ATP to form Ala-AMP and then transferred to the acceptor end of tRNA(Ala). Also edits incorrectly charged Ser-tRNA(Ala) and Gly-tRNA(Ala) via its editing domain. The polypeptide is Alanine--tRNA ligase (Shigella flexneri serotype 5b (strain 8401)).